A 492-amino-acid polypeptide reads, in one-letter code: Probable cytosol aminopeptidase (492 aa).

Mn(2+) is bound by residues lysine 259 and aspartate 264. Lysine 271 is an active-site residue. Positions 283, 342, and 344 each coordinate Mn(2+). Arginine 346 is an active-site residue.

It belongs to the peptidase M17 family. Requires Mn(2+) as cofactor.

It localises to the cytoplasm. It carries out the reaction Release of an N-terminal amino acid, Xaa-|-Yaa-, in which Xaa is preferably Leu, but may be other amino acids including Pro although not Arg or Lys, and Yaa may be Pro. Amino acid amides and methyl esters are also readily hydrolyzed, but rates on arylamides are exceedingly low.. The enzyme catalyses Release of an N-terminal amino acid, preferentially leucine, but not glutamic or aspartic acids.. Presumably involved in the processing and regular turnover of intracellular proteins. Catalyzes the removal of unsubstituted N-terminal amino acids from various peptides. The chain is Probable cytosol aminopeptidase (pepA) from Synechocystis sp. (strain ATCC 27184 / PCC 6803 / Kazusa).